Here is a 319-residue protein sequence, read N- to C-terminus: Ornithine carbamoyltransferase (319 aa).

Carbamoyl phosphate is bound by residues Ser55–Thr58, Gln82, Arg106, and His133–Gln136. L-ornithine-binding positions include Asn171, Asp234, and Ser238–Met239. Carbamoyl phosphate is bound by residues Cys274–Leu275 and Arg302.

It belongs to the aspartate/ornithine carbamoyltransferase superfamily. OTCase family.

It localises to the cytoplasm. It catalyses the reaction carbamoyl phosphate + L-ornithine = L-citrulline + phosphate + H(+). It functions in the pathway amino-acid biosynthesis; L-arginine biosynthesis; L-arginine from L-ornithine and carbamoyl phosphate: step 1/3. Functionally, reversibly catalyzes the transfer of the carbamoyl group from carbamoyl phosphate (CP) to the N(epsilon) atom of ornithine (ORN) to produce L-citrulline. This chain is Ornithine carbamoyltransferase, found in Corynebacterium diphtheriae (strain ATCC 700971 / NCTC 13129 / Biotype gravis).